A 326-amino-acid chain; its full sequence is Metal-binding protein YtgA (326 aa).

Residues 1–21 (MFFLHVRKYKHVIGGLLCLAG) form the signal peptide. Residues H75, H141, H207, and D299 each coordinate Fe(2+).

Belongs to the bacterial solute-binding protein 9 family. As to quaternary structure, monomer.

The protein localises to the periplasm. In terms of biological role, part of the ATP-binding cassette (ABC) transport system YtgABCD involved in metal import. Binds Fe(2+), Mn(2+) and Ni(2+), with a preference for Fe(2+) and delivers them to the membrane permease for translocation into the cytoplasm. The sequence is that of Metal-binding protein YtgA from Chlamydia muridarum (strain MoPn / Nigg).